Consider the following 502-residue polypeptide: Probable glycine dehydrogenase (decarboxylating) subunit 2 (502 aa).

Lys-273 bears the N6-(pyridoxal phosphate)lysine mark.

Belongs to the GcvP family. C-terminal subunit subfamily. The glycine cleavage system is composed of four proteins: P, T, L and H. In this organism, the P 'protein' is a heterodimer of two subunits. It depends on pyridoxal 5'-phosphate as a cofactor.

It catalyses the reaction N(6)-[(R)-lipoyl]-L-lysyl-[glycine-cleavage complex H protein] + glycine + H(+) = N(6)-[(R)-S(8)-aminomethyldihydrolipoyl]-L-lysyl-[glycine-cleavage complex H protein] + CO2. Its function is as follows. The glycine cleavage system catalyzes the degradation of glycine. The P protein binds the alpha-amino group of glycine through its pyridoxal phosphate cofactor; CO(2) is released and the remaining methylamine moiety is then transferred to the lipoamide cofactor of the H protein. In Pyrococcus horikoshii (strain ATCC 700860 / DSM 12428 / JCM 9974 / NBRC 100139 / OT-3), this protein is Probable glycine dehydrogenase (decarboxylating) subunit 2.